Consider the following 26-residue polypeptide: Hainantoxin F1-31.97 (26 aa).

Intrachain disulfides connect Cys-2-Cys-16 and Cys-9-Cys-21.

It belongs to the neurotoxin 10 (Hwtx-1) family. 17 (Hntx-9) subfamily. Expressed by the venom gland.

It localises to the secreted. Functionally, ion channel inhibitor. This Cyriopagopus hainanus (Chinese bird spider) protein is Hainantoxin F1-31.97.